A 181-amino-acid polypeptide reads, in one-letter code: ADP-ribosylation factor 1 (181 aa).

Gly2 carries the N-myristoyl glycine lipid modification. GTP contacts are provided by residues Gly24–Thr31, Asp67–Gln71, and Asn126–Asp129.

Belongs to the small GTPase superfamily. Arf family.

The protein resides in the golgi apparatus. The catalysed reaction is GTP + H2O = GDP + phosphate + H(+). Its function is as follows. GTP-binding protein involved in protein trafficking; may modulate vesicle budding and uncoating within the Golgi apparatus. This chain is ADP-ribosylation factor 1 (ARF1), found in Chlamydomonas reinhardtii (Chlamydomonas smithii).